The following is an 83-amino-acid chain: Small ribosomal subunit protein uS17 (83 aa).

Belongs to the universal ribosomal protein uS17 family. Part of the 30S ribosomal subunit.

Its function is as follows. One of the primary rRNA binding proteins, it binds specifically to the 5'-end of 16S ribosomal RNA. This Zymomonas mobilis subsp. mobilis (strain ATCC 31821 / ZM4 / CP4) protein is Small ribosomal subunit protein uS17.